We begin with the raw amino-acid sequence, 167 residues long: Peptide deformylase (167 aa).

Residues Cys91 and His133 each coordinate Fe cation. Residue Glu134 is part of the active site. His137 contributes to the Fe cation binding site.

The protein belongs to the polypeptide deformylase family. Fe(2+) is required as a cofactor.

It carries out the reaction N-terminal N-formyl-L-methionyl-[peptide] + H2O = N-terminal L-methionyl-[peptide] + formate. Removes the formyl group from the N-terminal Met of newly synthesized proteins. Requires at least a dipeptide for an efficient rate of reaction. N-terminal L-methionine is a prerequisite for activity but the enzyme has broad specificity at other positions. The sequence is that of Peptide deformylase from Buchnera aphidicola subsp. Schizaphis graminum (strain Sg).